Consider the following 389-residue polypeptide: UDP-N-acetylglucosamine--N-acetylmuramyl-(pentapeptide) pyrophosphoryl-undecaprenol N-acetylglucosamine transferase (389 aa).

UDP-N-acetyl-alpha-D-glucosamine-binding positions include 39–41 (TGG), N157, R193, S221, I275, 294–299 (ALTVSE), and Q320.

This sequence belongs to the glycosyltransferase 28 family. MurG subfamily.

Its subcellular location is the cell inner membrane. The catalysed reaction is di-trans,octa-cis-undecaprenyl diphospho-N-acetyl-alpha-D-muramoyl-L-alanyl-D-glutamyl-meso-2,6-diaminopimeloyl-D-alanyl-D-alanine + UDP-N-acetyl-alpha-D-glucosamine = di-trans,octa-cis-undecaprenyl diphospho-[N-acetyl-alpha-D-glucosaminyl-(1-&gt;4)]-N-acetyl-alpha-D-muramoyl-L-alanyl-D-glutamyl-meso-2,6-diaminopimeloyl-D-alanyl-D-alanine + UDP + H(+). It functions in the pathway cell wall biogenesis; peptidoglycan biosynthesis. In terms of biological role, cell wall formation. Catalyzes the transfer of a GlcNAc subunit on undecaprenyl-pyrophosphoryl-MurNAc-pentapeptide (lipid intermediate I) to form undecaprenyl-pyrophosphoryl-MurNAc-(pentapeptide)GlcNAc (lipid intermediate II). This chain is UDP-N-acetylglucosamine--N-acetylmuramyl-(pentapeptide) pyrophosphoryl-undecaprenol N-acetylglucosamine transferase, found in Saccharophagus degradans (strain 2-40 / ATCC 43961 / DSM 17024).